A 198-amino-acid polypeptide reads, in one-letter code: ATP-dependent Clp protease proteolytic subunit 2 (198 aa).

Ser-101 functions as the Nucleophile in the catalytic mechanism. The active site involves His-126.

Belongs to the peptidase S14 family. As to quaternary structure, fourteen ClpP subunits assemble into 2 heptameric rings which stack back to back to give a disk-like structure with a central cavity, resembling the structure of eukaryotic proteasomes.

The protein resides in the cytoplasm. It carries out the reaction Hydrolysis of proteins to small peptides in the presence of ATP and magnesium. alpha-casein is the usual test substrate. In the absence of ATP, only oligopeptides shorter than five residues are hydrolyzed (such as succinyl-Leu-Tyr-|-NHMec, and Leu-Tyr-Leu-|-Tyr-Trp, in which cleavage of the -Tyr-|-Leu- and -Tyr-|-Trp bonds also occurs).. Its function is as follows. Cleaves peptides in various proteins in a process that requires ATP hydrolysis. Has a chymotrypsin-like activity. Plays a major role in the degradation of misfolded proteins. This is ATP-dependent Clp protease proteolytic subunit 2 from Thermosynechococcus vestitus (strain NIES-2133 / IAM M-273 / BP-1).